The sequence spans 154 residues: MAL-like protein (154 aa).

The next 4 helical transmembrane spans lie at 24 to 44 (LFLT…FWVW), 61 to 81 (VLYV…SYLF), 99 to 119 (GTTG…TIIS), and 131 to 151 (VAAS…AFSI). The MARVEL domain maps to 24 to 154 (LFLTIPFAFF…ILHAFSIYYH (131 aa)).

It belongs to the MAL family.

Its subcellular location is the membrane. The protein is MAL-like protein (Mall) of Mus musculus (Mouse).